The following is a 359-amino-acid chain: Alanine racemase, biosynthetic (359 aa).

K34 functions as the Proton acceptor; specific for D-alanine in the catalytic mechanism. Residue K34 is modified to N6-(pyridoxal phosphate)lysine. R129 provides a ligand contact to substrate. The Proton acceptor; specific for L-alanine role is filled by Y255. M303 is a binding site for substrate.

Belongs to the alanine racemase family. Monomer but homodimer in the presence of the substrate. The cofactor is pyridoxal 5'-phosphate.

The catalysed reaction is L-alanine = D-alanine. The protein operates within amino-acid biosynthesis; D-alanine biosynthesis; D-alanine from L-alanine: step 1/1. Its pathway is cell wall biogenesis; peptidoglycan biosynthesis. In terms of biological role, catalyzes the interconversion of L-alanine and D-alanine. In Shigella sonnei, this protein is Alanine racemase, biosynthetic (alr).